The chain runs to 410 residues: Peptidase T (410 aa).

Residue H79 coordinates Zn(2+). D81 is an active-site residue. A Zn(2+)-binding site is contributed by D142. The Proton acceptor role is filled by E176. Residues E177, D199, and H381 each coordinate Zn(2+).

This sequence belongs to the peptidase M20B family. Zn(2+) serves as cofactor.

It is found in the cytoplasm. The enzyme catalyses Release of the N-terminal residue from a tripeptide.. Functionally, cleaves the N-terminal amino acid of tripeptides. In Bacillus cereus (strain ATCC 10987 / NRS 248), this protein is Peptidase T.